The following is a 364-amino-acid chain: Probable methyltransferase ICS2 (364 aa).

S-adenosyl-L-homocysteine is bound by residues Tyr-18, Cys-61, Asp-98, Leu-99, Ser-133, and Phe-134. 4 residues coordinate Mg(2+): Asn-172, Asp-258, Phe-260, and Asn-261.

It belongs to the methyltransferase superfamily. Type-7 methyltransferase family. Mg(2+) is required as a cofactor.

Functionally, no detectable N-methyltransferase activity. This chain is Probable methyltransferase ICS2, found in Camellia irrawadiensis (Burmese tea).